The primary structure comprises 639 residues: AP2-like ethylene-responsive transcription factor CRL5 (639 aa).

2 disordered regions span residues Pro-25 to His-59 and Gly-258 to Lys-277. Over residues Gln-43–His-59 the composition is skewed to low complexity. DNA-binding regions (AP2/ERF) lie at residues Gln-288–Pro-351 and Met-387–Asp-445. Positions Gln-547–Leu-561 are enriched in low complexity. Residues Gln-547 to Leu-579 form a disordered region.

Belongs to the AP2/ERF transcription factor family. AP2 subfamily. Highly expressed at the base of the stem. Expressed in stems. Expressed a low levels in crown roots and seeds. Expressed in the stem region where adventitious (crown) root initiation occurs.

It is found in the nucleus. In terms of biological role, acts as a positive regulator of adventitious (crown) root formation by promoting its initiation. Promotes adventitious root initiation through repression of cytokinin signaling by positively regulating the two-component response regulator RR1. Regulated by the auxin response factor and transcriptional activator ARF23/ARF1. The protein is AP2-like ethylene-responsive transcription factor CRL5 of Oryza sativa subsp. japonica (Rice).